Consider the following 471-residue polypeptide: NADH-quinone oxidoreductase subunit N 1 (471 aa).

The next 14 membrane-spanning stretches (helical) occupy residues 11–31, 39–59, 81–101, 105–125, 127–147, 162–182, 200–220, 234–254, 270–290, 296–316, 324–344, 365–385, 398–418, and 444–464; these read ALVP…AGAW, TIHV…ALAA, AIVL…VAGH, TEFV…AGAG, LIML…LAGW, LAGA…FGVA, AAAA…AGAV, PPPV…VAFY, LITA…AFAQ, MLGY…AVAG, ALLL…AVVA, ALAL…AVFV, GLAW…FYYL, and AVAL…GIVL.

The protein belongs to the complex I subunit 2 family. In terms of assembly, NDH-1 is composed of 14 different subunits. Subunits NuoA, H, J, K, L, M, N constitute the membrane sector of the complex.

It is found in the cell membrane. The catalysed reaction is a quinone + NADH + 5 H(+)(in) = a quinol + NAD(+) + 4 H(+)(out). Functionally, NDH-1 shuttles electrons from NADH, via FMN and iron-sulfur (Fe-S) centers, to quinones in the respiratory chain. The immediate electron acceptor for the enzyme in this species is believed to be a menaquinone. Couples the redox reaction to proton translocation (for every two electrons transferred, four hydrogen ions are translocated across the cytoplasmic membrane), and thus conserves the redox energy in a proton gradient. The chain is NADH-quinone oxidoreductase subunit N 1 from Streptomyces griseus subsp. griseus (strain JCM 4626 / CBS 651.72 / NBRC 13350 / KCC S-0626 / ISP 5235).